The sequence spans 226 residues: Lipoprotein-releasing system ATP-binding protein LolD (226 aa).

An ABC transporter domain is found at 6 to 226 (LKLDNIRRAF…KMSEGLLVEV (221 aa)). Residue 42–49 (GPSGAGKS) coordinates ATP.

Belongs to the ABC transporter superfamily. Lipoprotein translocase (TC 3.A.1.125) family. The complex is composed of two ATP-binding proteins (LolD) and two transmembrane proteins (LolC and LolE).

The protein resides in the cell inner membrane. Part of the ABC transporter complex LolCDE involved in the translocation of mature outer membrane-directed lipoproteins, from the inner membrane to the periplasmic chaperone, LolA. Responsible for the formation of the LolA-lipoprotein complex in an ATP-dependent manner. The sequence is that of Lipoprotein-releasing system ATP-binding protein LolD from Paramagnetospirillum magneticum (strain ATCC 700264 / AMB-1) (Magnetospirillum magneticum).